Here is a 571-residue protein sequence, read N- to C-terminus: 2-succinyl-5-enolpyruvyl-6-hydroxy-3-cyclohexene-1-carboxylate synthase (571 aa).

The protein belongs to the TPP enzyme family. MenD subfamily. In terms of assembly, homodimer. Mg(2+) serves as cofactor. It depends on Mn(2+) as a cofactor. Thiamine diphosphate is required as a cofactor.

The enzyme catalyses isochorismate + 2-oxoglutarate + H(+) = 5-enolpyruvoyl-6-hydroxy-2-succinyl-cyclohex-3-ene-1-carboxylate + CO2. It participates in quinol/quinone metabolism; 1,4-dihydroxy-2-naphthoate biosynthesis; 1,4-dihydroxy-2-naphthoate from chorismate: step 2/7. It functions in the pathway quinol/quinone metabolism; menaquinone biosynthesis. Catalyzes the thiamine diphosphate-dependent decarboxylation of 2-oxoglutarate and the subsequent addition of the resulting succinic semialdehyde-thiamine pyrophosphate anion to isochorismate to yield 2-succinyl-5-enolpyruvyl-6-hydroxy-3-cyclohexene-1-carboxylate (SEPHCHC). This chain is 2-succinyl-5-enolpyruvyl-6-hydroxy-3-cyclohexene-1-carboxylate synthase, found in Lysinibacillus sphaericus (strain C3-41).